We begin with the raw amino-acid sequence, 204 residues long: Large ribosomal subunit protein uL3 (204 aa).

The protein belongs to the universal ribosomal protein uL3 family. In terms of assembly, part of the 50S ribosomal subunit. Forms a cluster with proteins L14 and L19.

One of the primary rRNA binding proteins, it binds directly near the 3'-end of the 23S rRNA, where it nucleates assembly of the 50S subunit. The polypeptide is Large ribosomal subunit protein uL3 (Azobacteroides pseudotrichonymphae genomovar. CFP2).